Consider the following 216-residue polypeptide: Transmembrane emp24 domain-containing protein eca (216 aa).

The signal sequence occupies residues 1 to 20 (MRDQFICLALLLCALHSACG). The Lumenal portion of the chain corresponds to 21-182 (LYFHISETER…FRHTSESTNS (162 aa)). The GOLD domain maps to 30–126 (RKCFIEEVPD…QLRVHLDIQV (97 aa)). The stretch at 134-164 (ANVAQKEKLTELQLRIRQLLDQVEQITKEQN) forms a coiled coil. The helical transmembrane segment at 183–203 (RVLWWSLAQTLVLVCMGFWQM) threads the bilayer. Topologically, residues 204 to 216 (RHLKSFFEAKKLV) are cytoplasmic. A Prevents secretion from ER motif is present at residues 213–216 (KKLV).

It belongs to the EMP24/GP25L family.

The protein resides in the endoplasmic reticulum membrane. Eca and bai are essential, though not redundant, for dorsoventral patterning of the embryo. Specifically required during early embryogenesis for the activity of maternal tkv, while the zygotic tkv is not affected. Involved in Golgi organization. In Drosophila pseudoobscura pseudoobscura (Fruit fly), this protein is Transmembrane emp24 domain-containing protein eca.